We begin with the raw amino-acid sequence, 358 residues long: Carbamoyl phosphate synthase small chain (358 aa).

2 CPSase regions span residues 1-168 (MYNR…PALG) and 1-171 (MYNR…GRGR). Ser-46, Gly-220, and Gly-222 together coordinate L-glutamine. The 187-residue stretch at 172 to 358 (RVVLVDLGMK…FIKNIDNNMK (187 aa)) folds into the Glutamine amidotransferase type-1 domain. The active-site Nucleophile is Cys-247. Residues Met-248, Gln-251, Asn-289, Gly-291, and Tyr-292 each coordinate L-glutamine. Residues His-332 and Glu-334 contribute to the active site.

The protein belongs to the CarA family. Composed of two chains; the small (or glutamine) chain promotes the hydrolysis of glutamine to ammonia, which is used by the large (or ammonia) chain to synthesize carbamoyl phosphate. Tetramer of heterodimers (alpha,beta)4.

It catalyses the reaction hydrogencarbonate + L-glutamine + 2 ATP + H2O = carbamoyl phosphate + L-glutamate + 2 ADP + phosphate + 2 H(+). The catalysed reaction is L-glutamine + H2O = L-glutamate + NH4(+). Its pathway is amino-acid biosynthesis; L-arginine biosynthesis; carbamoyl phosphate from bicarbonate: step 1/1. It participates in pyrimidine metabolism; UMP biosynthesis via de novo pathway; (S)-dihydroorotate from bicarbonate: step 1/3. Functionally, small subunit of the glutamine-dependent carbamoyl phosphate synthetase (CPSase). CPSase catalyzes the formation of carbamoyl phosphate from the ammonia moiety of glutamine, carbonate, and phosphate donated by ATP, constituting the first step of 2 biosynthetic pathways, one leading to arginine and/or urea and the other to pyrimidine nucleotides. The small subunit (glutamine amidotransferase) binds and cleaves glutamine to supply the large subunit with the substrate ammonia. This Fusobacterium nucleatum subsp. nucleatum (strain ATCC 25586 / DSM 15643 / BCRC 10681 / CIP 101130 / JCM 8532 / KCTC 2640 / LMG 13131 / VPI 4355) protein is Carbamoyl phosphate synthase small chain.